Consider the following 548-residue polypeptide: Glucan endo-1,3-beta-glucosidase (548 aa).

The segment at residues 1–36 (MPHDRKNSSRRAWAALCAAVLAVSGALVGVAAPASA) is a signal peptide (tat-type signal). Residues 37–430 (VPATIPLTIT…AGTGALRIGS (394 aa)) are possesses beta-glucanase activity, but is unable to lyse viable cells. The 359-residue stretch at 38–396 (PATIPLTITN…PQAAYIKLDP (359 aa)) folds into the GH64 domain. The active-site Proton donor is the E153. D169 (proton acceptor) is an active-site residue. The region spanning 422–548 (GTGALRIGST…NQTEAQRWTL (127 aa)) is the Ricin B-type lectin domain. Positions 472 to 548 (GKCLDVARSG…NQTEAQRWTL (77 aa)) are essential for the lytic activity, but not for the beta-glucanase function.

This sequence belongs to the glycosyl hydrolase 64 family. In terms of processing, predicted to be exported by the Tat system. The position of the signal peptide cleavage has been experimentally proven.

The protein resides in the periplasm. The catalysed reaction is Hydrolysis of (1-&gt;3)-beta-D-glucosidic linkages in (1-&gt;3)-beta-D-glucans.. Functionally, lysis of cellular walls containing beta-1,3-glucans. Implicated in the defense against fungal pathogens. In Cellulosimicrobium cellulans (Arthrobacter luteus), this protein is Glucan endo-1,3-beta-glucosidase.